The chain runs to 461 residues: Fumarate hydratase class II (461 aa).

Substrate is bound by residues 97 to 99, 127 to 130, 137 to 139, and threonine 185; these read SGT, HPND, and SSN. Histidine 186 (proton donor/acceptor) is an active-site residue. Serine 316 is an active-site residue. Substrate is bound by residues serine 317 and 322–324; that span reads KVN.

This sequence belongs to the class-II fumarase/aspartase family. Fumarase subfamily. As to quaternary structure, homotetramer.

The protein resides in the cytoplasm. The catalysed reaction is (S)-malate = fumarate + H2O. It functions in the pathway carbohydrate metabolism; tricarboxylic acid cycle; (S)-malate from fumarate: step 1/1. In terms of biological role, involved in the TCA cycle. Catalyzes the stereospecific interconversion of fumarate to L-malate. The protein is Fumarate hydratase class II of Staphylococcus haemolyticus (strain JCSC1435).